The following is a 319-amino-acid chain: sn-1-specific diacylglycerol lipase ABHD11 (319 aa).

The transit peptide at Met1–Tyr28 directs the protein to the mitochondrion. Residues Pro69 to Lys304 form the AB hydrolase-1 domain. Active-site charge relay system residues include Ser143, Glu239, and His298.

Belongs to the AB hydrolase superfamily. In terms of processing, phosphorylated.

Its subcellular location is the mitochondrion. It localises to the mitochondrion matrix. The catalysed reaction is 1-octadecanoyl-2-(5Z,8Z,11Z,14Z-eicosatetraenoyl)-sn-glycerol + H2O = 2-(5Z,8Z,11Z,14Z-eicosatetraenoyl)-glycerol + octadecanoate + H(+). The enzyme catalyses a 1,2-diacyl-sn-glycerol + H2O = a 2-acylglycerol + a fatty acid + H(+). It catalyses the reaction a 1,3-diacyl-sn-glycerol + H2O = a 1-acyl-sn-glycerol + a fatty acid + H(+). It carries out the reaction 1-octadecanoyl-2-(9Z-octadecenoyl)-sn-glycerol + H2O = 2-(9Z-octadecenoyl)-glycerol + octadecanoate + H(+). The catalysed reaction is 1-octadecanoyl-2-(4Z,7Z,10Z,13Z,16Z,19Z-docosahexaenoyl)-sn-glycerol + H2O = 2-(4Z,7Z,10Z,13Z,16Z,19Z-docosahexaenoyl)-glycerol + octadecanoate + H(+). The enzyme catalyses 1,2-didecanoylglycerol + H2O = decanoylglycerol + decanoate + H(+). Functionally, catalyzes the hydrolysis of diacylglycerol in vitro and may function as a key regulator in lipid metabolism, namely by regulating the intracellular levels of diacylglycerol. 1,2-diacyl-sn-glycerols are the preferred substrate over 1,3-diacyl-sn-glycerols. The enzyme hydrolyzes stearate in preference to palmitate from the sn-1 position of 1,2-diacyl-sn-glycerols. The sequence is that of sn-1-specific diacylglycerol lipase ABHD11 from Xenopus tropicalis (Western clawed frog).